Reading from the N-terminus, the 87-residue chain is Bombyxin B-10 (87 aa).

The N-terminal stretch at 1 to 19 is a signal peptide; that stretch reads MKTILIFLVVISLMYSGEA. Intrachain disulfides connect Cys27/Cys73, Cys39/Cys86, and Cys72/Cys77. The propeptide at 46–64 is bombyxin B-10 C peptide; the sequence is SGAQYAPYFWTRQYLGSRG.

It belongs to the insulin family. As to quaternary structure, heterodimer of a B chain and an A chain linked by two disulfide bonds.

Its subcellular location is the secreted. Brain peptide responsible for activation of prothoracic glands to produce ecdysone in insects. The chain is Bombyxin B-10 (BBXB10) from Bombyx mori (Silk moth).